The following is a 465-amino-acid chain: 3-isopropylmalate dehydratase large subunit (465 aa).

[4Fe-4S] cluster is bound by residues Cys347, Cys407, and Cys410.

Belongs to the aconitase/IPM isomerase family. LeuC type 1 subfamily. Heterodimer of LeuC and LeuD. Requires [4Fe-4S] cluster as cofactor.

It catalyses the reaction (2R,3S)-3-isopropylmalate = (2S)-2-isopropylmalate. Its pathway is amino-acid biosynthesis; L-leucine biosynthesis; L-leucine from 3-methyl-2-oxobutanoate: step 2/4. In terms of biological role, catalyzes the isomerization between 2-isopropylmalate and 3-isopropylmalate, via the formation of 2-isopropylmaleate. The sequence is that of 3-isopropylmalate dehydratase large subunit from Buchnera aphidicola subsp. Pemphigus spyrothecae.